We begin with the raw amino-acid sequence, 424 residues long: Satellite RNA 48 kDa protein (424 aa).

The segment at Thr-15–Lys-78 is disordered. Polar residues-rich tracts occupy residues Arg-31–Asp-42 and Asn-62–Gly-73.

The protein belongs to the nepovirus satellite RNA 48 kDa protein family.

The polypeptide is Satellite RNA 48 kDa protein (Allium porrum (Leek)).